The chain runs to 483 residues: S-adenosylhomocysteine hydrolase-like protein 1 (483 aa).

The tract at residues methionine 1–serine 56 is disordered. Residues serine 17–aspartate 36 are compositionally biased toward low complexity. Residues arginine 18 to arginine 45 are PEST. Position 21 is a phosphoserine; by PKD (serine 21). Phosphoserine occurs at positions 24, 27, 30, and 37. Positions glutamine 91–lysine 154 are interaction with BCL2L10. Positions 108, 182, 207, 237, and 241 each coordinate substrate. Residues serine 234–serine 401 form an NAD binding region. NAD(+)-binding positions include glycine 271 to valine 275, glutamate 294, and asparagine 329. The residue at position 344 (serine 344) is a Phosphoserine. Methionine 350–histidine 352 lines the NAD(+) pocket. The PDZ-binding stretch occupies residues asparagine 473–tyrosine 483.

The protein belongs to the adenosylhomocysteinase family. In terms of assembly, forms multimers. Forms heteromultimers with AHCYL2 (via the C-terminal region). Interacts (when phosphorylated) with ITPR1 (when not phosphorylated); the interaction suppresses inositol 1,4,5-trisphosphate binding to ITPR1. Interacts with BCL2L10; this strengthens the interaction of AHCYL1 with ITPR1. Interacts with CFTR and SLC26A6; the interactions take place once AHCYL1 is released from ITPR1 and increase CFTR and SLC26A6 activities. Interacts with RRM1; in a phosphorylation- and (dATP)-dependent manner. Interacts (via PEST domain when phosphorylated) with SLC4A4 isoform 1 but not isoform 2; the interaction increases SLC4A4 isoform 1 activity. Interacts (when phosphorylated) with SLC9A3; the interaction is required for SLC9A3 apical location and activity. Interacts (when phosphorylated) with FIP1L1; the interaction is direct and associates AHCYL1 with the CPSF complex and RNA. Interacts with PAPOLA. Interacts with ZCCHC4. Interacts with AHCY. NAD(+) is required as a cofactor. In terms of processing, phosphorylated at Ser/Thr residues between Ser-21 and Thr-25 in the PEST region: required for interaction with dATP-bound RRM1 and ITPR1. Phosphorylation at Ser-21 by PRKD1 and CAMK4 is required for further phosphorylations by CSNK1A1. Phosphorylation is induced by oxidative stress. Probably phosphorylated by CAMK2A; phosphorylation at Ser-21 may be required for interaction with SLC9A3. Dephosphorylated in response to apoptotic stress conditions which causes translocation of both AHCYL1 and BCL2L10 from mitochondria-associated endoplasmic reticulum membranes and promotes apoptosis. Expressed in kidney proximal tubules and outer medulla (at protein level).

The protein resides in the endoplasmic reticulum. The protein localises to the cytoplasm. It is found in the cytosol. Its subcellular location is the apical cell membrane. It localises to the microsome. Functionally, multifaceted cellular regulator which coordinates several essential cellular functions including regulation of epithelial HCO3(-) and fluid secretion, mRNA processing and DNA replication. Regulates ITPR1 sensitivity to inositol 1,4,5-trisphosphate, competing for the common binding site and acting as endogenous 'pseudoligand' whose inhibitory activity can be modulated by its phosphorylation status. Promotes the formation of contact points between the endoplasmic reticulum (ER) and mitochondria, facilitating transfer of Ca(2+) from the ER to mitochondria. Under normal cellular conditions, functions cooperatively with BCL2L10 to limit ITPR1-mediated Ca(2+) release but, under apoptotic stress conditions, dephosphorylated which promotes dissociation of both AHCYL1 and BCL2L10 from mitochondria-associated endoplasmic reticulum membranes, inhibits BCL2L10 interaction with ITPR1 and leads to increased Ca(2+) transfer to mitochondria which promotes apoptosis. In the pancreatic and salivary ducts, at resting state, attenuates inositol 1,4,5-trisphosphate-induced calcium release by interacting with ITPR1. When extracellular stimuli induce ITPR1 phosphorylation or inositol 1,4,5-trisphosphate production, dissociates from ITPR1 to interact with CFTR and SLC26A6, mediating their synergistic activation by calcium and cAMP that stimulates the epithelial secretion of electrolytes and fluid. Also activates basolateral SLC4A4 isoform 1 to coordinate fluid and HCO3(-) secretion. Inhibits the effect of STK39 on SLC4A4 and CFTR by recruiting PP1 phosphatase which activates SLC4A4, SLC26A6 and CFTR through dephosphorylation. Mediates the induction of SLC9A3 surface expression produced by Angiotensin-2. Depending on the cell type, activates SLC9A3 in response to calcium or reverses SLC9A3R2-dependent calcium inhibition. May modulate the polyadenylation state of specific mRNAs, both by controlling the subcellular location of FIP1L1 and by inhibiting PAPOLA activity, in response to a stimulus that alters its phosphorylation state. Acts as a (dATP)-dependent inhibitor of ribonucleotide reductase large subunit RRM1, controlling the endogenous dNTP pool and ensuring normal cell cycle progression. In vitro does not exhibit any S-adenosyl-L-homocysteine hydrolase activity. The chain is S-adenosylhomocysteine hydrolase-like protein 1 from Rattus norvegicus (Rat).